The following is a 473-amino-acid chain: Membrane-bound acylglycerophosphatidylinositol O-acyltransferase MBOAT7 (473 aa).

Over 1 to 5 the chain is Cytoplasmic; the sequence is MTPEE. The chain crosses the membrane as a helical span at residues 6–22; that stretch reads WTYLMVLLISIPVGFLF. The Lumenal portion of the chain corresponds to 23 to 33; it reads KKAGPGLKRWG. A helical transmembrane segment spans residues 34–57; sequence AAAVGLGLTLFTCGPHSLHSLITI. The Cytoplasmic segment spans residues 58–73; it reads LGTWALIQAQPCSCHA. The helical transmembrane segment at 74–93 threads the bilayer; the sequence is LALAWTFSYLLFFRALSLLG. Over 94–194 the chain is Lumenal; the sequence is LPTPTPFTNA…VPSLRPLLRR (101 aa). The chain crosses the membrane as a helical span at residues 195–212; sequence AWPAPLFGLLFLLSSHLF. The Cytoplasmic segment spans residues 213–231; the sequence is PLEAVREDAFYARPLPTRL. The chain crosses the membrane as a helical span at residues 232–261; the sequence is FYMIPVFFAFRMRFYVAWIAAECGCIAAGF. At 262–426 the chain is on the lumenal side; the sequence is GAYPVAAKAR…LSMADTLRYW (165 aa). Residue N321 is glycosylated (N-linked (GlcNAc...) asparagine). Residues 427–447 form a helical membrane-spanning segment; sequence ASIYFWVHFLALACLGLGLVL. At 448–473 the chain is on the cytoplasmic side; that stretch reads GGGSPSKRKTPSQATSSQAKEKLREE. Residues 451–473 are disordered; it reads SPSKRKTPSQATSSQAKEKLREE.

It belongs to the membrane-bound acyltransferase family. As to quaternary structure, interacts with SPTSSA; the interaction facilitates MBOAT7 location to mitochondria-associated membranes (MAMs).

It is found in the endoplasmic reticulum membrane. It catalyses the reaction a 1-acyl-sn-glycero-3-phospho-(1D-myo-inositol) + an acyl-CoA = a 1,2-diacyl-sn-glycero-3-phospho-(1D-myo-inositol) + CoA. The enzyme catalyses 1-octadecanoyl-sn-glycero-3-phospho-(1D-myo-inositol) + (5Z,8Z,11Z,14Z)-eicosatetraenoyl-CoA = 1-octadecanoyl-2-(5Z,8Z,11Z,14Z-eicosatetraenoyl)-sn-glycero-3-phospho-(1D-myo-inositol) + CoA. It carries out the reaction a 1-acyl-sn-glycero-3-phospho-(1D-myo-inositol) + (5Z,8Z,11Z,14Z)-eicosatetraenoyl-CoA = a 1-acyl-2-(5Z,8Z,11Z,14Z-eicosatetraenoyl)-sn-glycero-3-phospho-(1D-myo-inositol) + CoA. The catalysed reaction is (5Z,8Z,11Z,14Z)-eicosatetraenoyl-CoA + 1-hexadecanoyl-sn-glycero-3-phosphocholine = 1-hexadecanoyl-2-(5Z,8Z,11Z,14Z-eicosatetraenoyl)-sn-glycero-3-phosphocholine + CoA. It functions in the pathway lipid metabolism; phospholipid metabolism. In terms of biological role, acyltransferase which catalyzes the transfer of an acyl group from an acyl-CoA to a lysophosphatidylinositol (1-acylglycerophosphatidylinositol or LPI) leading to the production of a phosphatidylinositol (1,2-diacyl-sn-glycero-3-phosphoinositol or PI) and participates in the reacylation step of the phospholipid remodeling pathway also known as the Lands cycle. Prefers arachidonoyl-CoA as the acyl donor, thus contributing to the regulation of free levels arachidonic acid in cell. In liver, participates in the regulation of triglyceride metabolism through the phosphatidylinositol acyl-chain remodeling regulation. The sequence is that of Membrane-bound acylglycerophosphatidylinositol O-acyltransferase MBOAT7 from Mus musculus (Mouse).